Reading from the N-terminus, the 119-residue chain is Flagellar transcriptional regulator FlhD (119 aa).

Belongs to the FlhD family. Homodimer; disulfide-linked. Forms a heterohexamer composed of two FlhC and four FlhD subunits. Each FlhC binds a FlhD dimer, forming a heterotrimer, and a hexamer assembles by dimerization of two heterotrimers.

The protein resides in the cytoplasm. Functionally, functions in complex with FlhC as a master transcriptional regulator that regulates transcription of several flagellar and non-flagellar operons by binding to their promoter region. Activates expression of class 2 flagellar genes, including fliA, which is a flagellum-specific sigma factor that turns on the class 3 genes. Also regulates genes whose products function in a variety of physiological pathways. In Pectobacterium atrosepticum (strain SCRI 1043 / ATCC BAA-672) (Erwinia carotovora subsp. atroseptica), this protein is Flagellar transcriptional regulator FlhD.